We begin with the raw amino-acid sequence, 504 residues long: MTTFTKLSEQEAPSLSVHPTRRISKINPNIYAGFTEHMGRCIYGGIYDPGNPLSDENGFRKDVLEALKELNIPVVRYPGGNFMATYHWIDGVGPKDQRPARPELAWLGTETNQFGTDEFLKWCEVLGTEPYFCLNFGTGTLDEALAWVEYCNGTRDTYYANLRRKNGREEPYNVKYWALGNETWGPWQVEQMTKEAYAHKAYQWAKALKLLDPSLVLVLCGQDGTASWDYYTLKQCLLPLNSPLSTSAVPLIDMHSIHLYTASSDHRANATAPLAAERAIEITSSLIDLARIENGVPADQLRPTICFDEWNVWDPIRAEGSKGAEECYTLSDALAVAVYLNVFVRKSKDLGMCCIAQSVNVISPLMTTKDGITKQTTWWPLYLFSRYMRGWTISAHLSCSTYEGETSPKWVRGVKDTPWLDVSATLGEDGYVNLAVVNVHDDKGIETQLEGPSGEVSVFTVTGDNVNVTNMKGKQEVGIVESTWDGKGKYVFPKHSFTLLRWKA.

Residues asparagine 152, asparagine 181, asparagine 269, and asparagine 467 are each glycosylated (N-linked (GlcNAc...) asparagine).

Belongs to the glycosyl hydrolase 51 family.

Its subcellular location is the secreted. The catalysed reaction is Hydrolysis of terminal non-reducing alpha-L-arabinofuranoside residues in alpha-L-arabinosides.. It participates in glycan metabolism; L-arabinan degradation. In terms of biological role, alpha-L-arabinofuranosidase involved in the degradation of arabinoxylan, a major component of plant hemicellulose. Acts only on small linear 1,5-alpha-linked L-arabinofuranosyl oligosaccharides. The chain is Probable alpha-L-arabinofuranosidase C (abfC) from Aspergillus terreus (strain NIH 2624 / FGSC A1156).